The sequence spans 247 residues: ATP synthase subunit a (247 aa).

6 consecutive transmembrane segments (helical) span residues isoleucine 24–methionine 44, phenylalanine 82–isoleucine 102, isoleucine 112–tyrosine 132, leucine 141–isoleucine 161, methionine 194–valine 214, and leucine 219–isoleucine 239.

It belongs to the ATPase A chain family. As to quaternary structure, F-type ATPases have 2 components, CF(1) - the catalytic core - and CF(0) - the membrane proton channel. CF(1) has five subunits: alpha(3), beta(3), gamma(1), delta(1), epsilon(1). CF(0) has three main subunits: a(1), b(2) and c(9-12). The alpha and beta chains form an alternating ring which encloses part of the gamma chain. CF(1) is attached to CF(0) by a central stalk formed by the gamma and epsilon chains, while a peripheral stalk is formed by the delta and b chains.

Its subcellular location is the cell inner membrane. In terms of biological role, key component of the proton channel; it plays a direct role in the translocation of protons across the membrane. In Nitrobacter winogradskyi (strain ATCC 25391 / DSM 10237 / CIP 104748 / NCIMB 11846 / Nb-255), this protein is ATP synthase subunit a.